The sequence spans 339 residues: Dihydroorotate dehydrogenase (quinone) (339 aa).

FMN is bound by residues 64–68 (AGADK) and T88. K68 serves as a coordination point for substrate. 113–117 (NRNGF) provides a ligand contact to substrate. 2 residues coordinate FMN: N141 and N174. N174 contributes to the substrate binding site. The active-site Nucleophile is the S177. Residue N179 coordinates substrate. The FMN site is built by K219 and T247. 248–249 (NT) serves as a coordination point for substrate. FMN contacts are provided by residues G270, G299, and 320–321 (YS).

Belongs to the dihydroorotate dehydrogenase family. Type 2 subfamily. In terms of assembly, monomer. It depends on FMN as a cofactor.

The protein localises to the cell membrane. It carries out the reaction (S)-dihydroorotate + a quinone = orotate + a quinol. The protein operates within pyrimidine metabolism; UMP biosynthesis via de novo pathway; orotate from (S)-dihydroorotate (quinone route): step 1/1. Its function is as follows. Catalyzes the conversion of dihydroorotate to orotate with quinone as electron acceptor. The sequence is that of Dihydroorotate dehydrogenase (quinone) from Haemophilus influenzae (strain 86-028NP).